The chain runs to 179 residues: Inner membrane-spanning protein YciB (179 aa).

Helical transmembrane passes span 22–42 (IYAA…YSWV), 50–70 (MALI…FFHN), 76–96 (WKVT…QWVM), 121–141 (LAWA…AFWL), and 149–169 (FKVF…GVYI).

The protein belongs to the YciB family.

The protein localises to the cell inner membrane. Plays a role in cell envelope biogenesis, maintenance of cell envelope integrity and membrane homeostasis. This Salmonella arizonae (strain ATCC BAA-731 / CDC346-86 / RSK2980) protein is Inner membrane-spanning protein YciB.